The chain runs to 286 residues: ATP synthase gamma chain (286 aa).

The protein belongs to the ATPase gamma chain family. F-type ATPases have 2 components, CF(1) - the catalytic core - and CF(0) - the membrane proton channel. CF(1) has five subunits: alpha(3), beta(3), gamma(1), delta(1), epsilon(1). CF(0) has three main subunits: a, b and c.

The protein resides in the cell inner membrane. Produces ATP from ADP in the presence of a proton gradient across the membrane. The gamma chain is believed to be important in regulating ATPase activity and the flow of protons through the CF(0) complex. The chain is ATP synthase gamma chain from Flavobacterium psychrophilum (strain ATCC 49511 / DSM 21280 / CIP 103535 / JIP02/86).